Here is a 31-residue protein sequence, read N- to C-terminus: Mu-conotoxin SmIIIA (31 aa).

The propeptide occupies 1–6 (PLFDKR). Gln-7 is modified (pyrrolidone carboxylic acid). Intrachain disulfides connect Cys-9-Cys-21, Cys-10-Cys-27, and Cys-16-Cys-28. Cysteine amide is present on Cys-28.

This sequence belongs to the conotoxin M superfamily. SmIIIA' is a putative isoform where the N-terminal AA is missing. As to expression, expressed by the venom duct.

It localises to the secreted. Functionally, mu-conotoxins block voltage-gated sodium channels (Nav). This toxin blocks rNav1.5/SCN5A (IC(50) is 1.3 uM), rNav1.6/SCN8A (IC(50) is 160 nM), rNav1.7/SCN9A (IC(50) is 1.3 uM), rNav1.1/SCN1A (K(d) is 3.8 nM), rNav1.2/SCN2A (K(d) is 1.3 nM), rNav1.4/SCN4A (K(d) is 0.22 nM), rNav1.6/SCN8A (K(d) is 69 nM), and rNav1.7/SCN9A (K(d) is 260 nM). This toxin is very potent but weakly discriminating among sodium channels. The block of these channels is modified when beta-subunits are coexpressed with alpha subunits. Hence, blocks of channels containing beta-1 and beta-3 subunits are more potent (compared to channels without beta subunits), whereas blocks of channels containing beta-2 and beta-4 subunits are less potent (compared to channels without beta subunits). This Conus stercusmuscarum (Fly-specked cone) protein is Mu-conotoxin SmIIIA.